A 110-amino-acid chain; its full sequence is Large ribosomal subunit protein uL22 (110 aa).

This sequence belongs to the universal ribosomal protein uL22 family. As to quaternary structure, part of the 50S ribosomal subunit.

Functionally, this protein binds specifically to 23S rRNA; its binding is stimulated by other ribosomal proteins, e.g. L4, L17, and L20. It is important during the early stages of 50S assembly. It makes multiple contacts with different domains of the 23S rRNA in the assembled 50S subunit and ribosome. The globular domain of the protein is located near the polypeptide exit tunnel on the outside of the subunit, while an extended beta-hairpin is found that lines the wall of the exit tunnel in the center of the 70S ribosome. The sequence is that of Large ribosomal subunit protein uL22 from Pseudomonas savastanoi pv. phaseolicola (strain 1448A / Race 6) (Pseudomonas syringae pv. phaseolicola (strain 1448A / Race 6)).